Consider the following 309-residue polypeptide: Probable manganese-dependent inorganic pyrophosphatase (309 aa).

6 residues coordinate Mn(2+): H9, D13, D15, D75, H97, and D149.

It belongs to the PPase class C family. Requires Mn(2+) as cofactor.

Its subcellular location is the cytoplasm. It catalyses the reaction diphosphate + H2O = 2 phosphate + H(+). The polypeptide is Probable manganese-dependent inorganic pyrophosphatase (Bacillus mycoides (strain KBAB4) (Bacillus weihenstephanensis)).